The following is a 114-amino-acid chain: Flagellar hook-basal body complex protein FliE (114 aa).

Belongs to the FliE family.

The protein localises to the bacterial flagellum basal body. The protein is Flagellar hook-basal body complex protein FliE of Burkholderia lata (strain ATCC 17760 / DSM 23089 / LMG 22485 / NCIMB 9086 / R18194 / 383).